The sequence spans 231 residues: Dephospho-CoA kinase domain-containing protein (231 aa).

The DPCK domain maps to Leu3–Leu207. Gly8–Ser15 is a binding site for ATP.

The protein belongs to the CoaE family.

This chain is Dephospho-CoA kinase domain-containing protein (DCAKD), found in Bos taurus (Bovine).